A 185-amino-acid chain; its full sequence is Elongation factor P (185 aa).

Belongs to the elongation factor P family.

Its subcellular location is the cytoplasm. It functions in the pathway protein biosynthesis; polypeptide chain elongation. Functionally, involved in peptide bond synthesis. Stimulates efficient translation and peptide-bond synthesis on native or reconstituted 70S ribosomes in vitro. Probably functions indirectly by altering the affinity of the ribosome for aminoacyl-tRNA, thus increasing their reactivity as acceptors for peptidyl transferase. In Clostridium tetani (strain Massachusetts / E88), this protein is Elongation factor P.